An 815-amino-acid polypeptide reads, in one-letter code: Leucine--tRNA ligase (815 aa).

Positions 40–50 (PYPSGRIHMGH) match the 'HIGH' region motif. The 'KMSKS' region motif lies at 583–587 (KMSKS). Lys586 lines the ATP pocket.

Belongs to the class-I aminoacyl-tRNA synthetase family.

It is found in the cytoplasm. The catalysed reaction is tRNA(Leu) + L-leucine + ATP = L-leucyl-tRNA(Leu) + AMP + diphosphate. The protein is Leucine--tRNA ligase of Nitratiruptor sp. (strain SB155-2).